Reading from the N-terminus, the 210-residue chain is tRNA (guanine-N(7)-)-methyltransferase (210 aa).

Glu-36, Glu-61, Asp-90, and Asp-112 together coordinate S-adenosyl-L-methionine. The active site involves Asp-112. Substrate is bound by residues Lys-116, Asp-148, and 188 to 191 (TEYE).

Belongs to the class I-like SAM-binding methyltransferase superfamily. TrmB family.

It carries out the reaction guanosine(46) in tRNA + S-adenosyl-L-methionine = N(7)-methylguanosine(46) in tRNA + S-adenosyl-L-homocysteine. It functions in the pathway tRNA modification; N(7)-methylguanine-tRNA biosynthesis. Functionally, catalyzes the formation of N(7)-methylguanine at position 46 (m7G46) in tRNA. The chain is tRNA (guanine-N(7)-)-methyltransferase from Mycoplasma genitalium (strain ATCC 33530 / DSM 19775 / NCTC 10195 / G37) (Mycoplasmoides genitalium).